A 552-amino-acid polypeptide reads, in one-letter code: TBCC domain-containing protein 1 (552 aa).

Positions 304-435 (PRLHRIVVMS…LEDHMARTGL (132 aa)) constitute a C-CAP/cofactor C-like domain.

It belongs to the TBCC family. In terms of tissue distribution, expressed in brain and testis (at protein level).

The protein localises to the cytoplasm. Its subcellular location is the cytoskeleton. It localises to the microtubule organizing center. It is found in the centrosome. The protein resides in the spindle pole. In terms of biological role, plays a role in the regulation of centrosome and Golgi apparatus positioning, with consequences on cell shape and cell migration. The protein is TBCC domain-containing protein 1 (Tbccd1) of Mus musculus (Mouse).